The following is a 508-amino-acid chain: Hydroxymethylglutaryl-CoA synthase, mitochondrial (508 aa).

Residues 1 to 37 constitute a mitochondrion transit peptide; that stretch reads MQRLLTPVRQVLRVKRAMQEASFMPPLLPPAAHQRFS. Lys-52 carries the N6-succinyllysine modification. Residues Glu-80 and Ala-81 each coordinate (3S)-3-hydroxy-3-methylglutaryl-CoA. The Proton donor/acceptor role is filled by Glu-132. (3S)-3-hydroxy-3-methylglutaryl-CoA-binding residues include Cys-166, Asn-204, and Thr-208. Catalysis depends on Cys-166, which acts as the Acyl-thioester intermediate. The residue at position 243 (Lys-243) is an N6-acetyllysine. Position 256 is an N6-acetyllysine; alternate (Lys-256). Lys-256 is subject to N6-succinyllysine; alternate. (3S)-3-hydroxy-3-methylglutaryl-CoA-binding residues include Ser-258 and His-301. The Proton donor/acceptor role is filled by His-301. Lys-306 carries the N6-acetyllysine modification. Position 310 (Lys-310) interacts with (3S)-3-hydroxy-3-methylglutaryl-CoA. N6-acetyllysine; alternate is present on Lys-310. At Lys-310 the chain carries N6-succinyllysine; alternate. At Lys-333 the chain carries N6-succinyllysine. An N6-acetyllysine; alternate mark is found at Lys-342, Lys-350, Lys-354, and Lys-358. 4 positions are modified to N6-succinyllysine; alternate: Lys-342, Lys-350, Lys-354, and Lys-358. 2 residues coordinate (3S)-3-hydroxy-3-methylglutaryl-CoA: Asn-380 and Ser-414. Position 433 is a phosphoserine (Ser-433). Position 437 is an N6-acetyllysine (Lys-437). A phosphoserine mark is found at Ser-440 and Ser-456. The residue at position 473 (Lys-473) is an N6-acetyllysine; alternate. Residue Lys-473 is modified to N6-succinyllysine; alternate.

Belongs to the thiolase-like superfamily. HMG-CoA synthase family. In terms of assembly, homodimer. In terms of processing, succinylated. Desuccinylated by SIRT5. Succinylation, at least at Lys-310, inhibits the enzymatic activity.

It is found in the mitochondrion. The enzyme catalyses acetoacetyl-CoA + acetyl-CoA + H2O = (3S)-3-hydroxy-3-methylglutaryl-CoA + CoA + H(+). Its pathway is metabolic intermediate biosynthesis; (R)-mevalonate biosynthesis; (R)-mevalonate from acetyl-CoA: step 2/3. In terms of biological role, catalyzes the first irreversible step in ketogenesis, condensing acetyl-CoA to acetoacetyl-CoA to form HMG-CoA, which is converted by HMG-CoA reductase (HMGCR) into mevalonate. This is Hydroxymethylglutaryl-CoA synthase, mitochondrial (HMGCS2) from Sus scrofa (Pig).